A 154-amino-acid chain; its full sequence is Golgi-associated plant pathogenesis-related protein 1 (154 aa).

Residues 1–21 (MGKSASKQFHNEVLKAHNEYR) are disordered. Gly-2 carries N-myristoyl glycine lipidation. Residues 9-21 (FHNEVLKAHNEYR) show a composition bias toward basic and acidic residues. One can recognise an SCP domain in the interval 14–132 (LKAHNEYRQK…SDGSSFVVAR (119 aa)). Positions 30–53 (KLCKNLNREAQQYSEALASTRILK) form a coiled coil. An interaction with CAV1 region spans residues 91-98 (NFQQPGFT).

It belongs to the CRISP family. Homodimer. Interacts with CAV1. As to expression, highest expression in lung and peripheral leukocytes, and minor expression in liver and kidney.

The protein resides in the golgi apparatus membrane. This chain is Golgi-associated plant pathogenesis-related protein 1 (GLIPR2), found in Homo sapiens (Human).